The chain runs to 358 residues: UPF0575 protein C19orf67 (358 aa).

The segment at 1 to 84 (MATEQWFEGS…PGPAPPRLSL (84 aa)) is disordered. 2 stretches are compositionally biased toward pro residues: residues 17–32 (ETPPPDALEPGTPPCG) and 70–80 (PLVPRPGPAPP).

This sequence belongs to the UPF0575 family.

This is UPF0575 protein C19orf67 (C19orf67) from Homo sapiens (Human).